Reading from the N-terminus, the 423-residue chain is Serine--tRNA ligase (423 aa).

Threonine 229–glutamate 231 serves as a coordination point for L-serine. ATP is bound at residue arginine 260 to glutamate 262. Glutamate 283 is an L-serine binding site. Glutamate 347–serine 350 is a binding site for ATP. Position 383 (serine 383) interacts with L-serine.

The protein belongs to the class-II aminoacyl-tRNA synthetase family. Type-1 seryl-tRNA synthetase subfamily. In terms of assembly, homodimer. The tRNA molecule binds across the dimer.

The protein localises to the cytoplasm. The catalysed reaction is tRNA(Ser) + L-serine + ATP = L-seryl-tRNA(Ser) + AMP + diphosphate + H(+). The enzyme catalyses tRNA(Sec) + L-serine + ATP = L-seryl-tRNA(Sec) + AMP + diphosphate + H(+). The protein operates within aminoacyl-tRNA biosynthesis; selenocysteinyl-tRNA(Sec) biosynthesis; L-seryl-tRNA(Sec) from L-serine and tRNA(Sec): step 1/1. In terms of biological role, catalyzes the attachment of serine to tRNA(Ser). Is also able to aminoacylate tRNA(Sec) with serine, to form the misacylated tRNA L-seryl-tRNA(Sec), which will be further converted into selenocysteinyl-tRNA(Sec). The sequence is that of Serine--tRNA ligase from Syntrophotalea carbinolica (strain DSM 2380 / NBRC 103641 / GraBd1) (Pelobacter carbinolicus).